A 225-amino-acid chain; its full sequence is Ribonuclease T (225 aa).

The disordered stretch occupies residues 1 to 21; the sequence is MSEDHFDDEHEGHGGGGGSRH. The Exonuclease domain maps to 33-207; that stretch reads VVVDVETGGF…YDTEKTAELF (175 aa). 4 residues coordinate Mg(2+): Asp36, Glu38, His194, and Asp199. His194 (proton donor/acceptor) is an active-site residue.

Belongs to the RNase T family. In terms of assembly, homodimer. Requires Mg(2+) as cofactor.

Functionally, trims short 3' overhangs of a variety of RNA species, leaving a one or two nucleotide 3' overhang. Responsible for the end-turnover of tRNA: specifically removes the terminal AMP residue from uncharged tRNA (tRNA-C-C-A). Also appears to be involved in tRNA biosynthesis. The polypeptide is Ribonuclease T (Pseudomonas savastanoi pv. phaseolicola (strain 1448A / Race 6) (Pseudomonas syringae pv. phaseolicola (strain 1448A / Race 6))).